The sequence spans 760 residues: MIRGMLPRGLRALRPSVSPTVVSSSLHRNFHSSIRRFDEKIPETYEEEKVIIDEINQSLTEKDLASSSRLRNIGVSAHIDSGKTTFTERVLYYTGRIKAIHEVRGRDAVGAKMDHMELEREKGITIQSAATYCSWDKDDKNYHFNLIDTPGHIDFTIEVERALRVLDGAVLVVCAVSGVQSQTVTVDRQMRRYNVPRVTFINKMDRMGADPFRAIEQINLKLKTPAAAIQVPIGAESELKGVVNIIDRVALYNEGAQGEEIRAAEVPAELADLVEEKRALLIETLADVDEEIADLYLEGQEPTVPQIKAAIRRATIGRKFTPVLMGSALANKGVQPVLDAVVDYLPQPNEILNTGLDISTGVEKRTNLIPSSTAPFVGLAFKLEEGKYGQLTYIRVYQGKLKKGSYMNHIKSGKKVKVSRLVRMHSNDMEDVDEVGAGEICATFGIDCASGDTFIGHNSEQQIAMSSMFVPEAVISLSISPKSKDNGQFSKAMNRFQKEDPTFRVKYDPESKETIISGMGELHLEIYVERMKREYGVECITGKPQVSYREAITAPTTFDYTHKKQSGGSGQYGRVMGEMTPLEGENKFSQHIVGGKIPEKFLFACSKGFEDSLEKGPLIGHRVLGVHMHINDGQTHVVDSSELSFRTATHGAFRQAFLNAKPVILEPIMSVEVSAPNEFQGSVVGLINKLGGMILETVNGQDEFTVTAECSLNTMFGFSTSLRACTQGKGEFSLEFCKYSQCAPQLQRELIAEHEKKQKK.

A mitochondrion-targeting transit peptide spans 1–37 (MIRGMLPRGLRALRPSVSPTVVSSSLHRNFHSSIRRF). The region spanning 68-349 (SRLRNIGVSA…AVVDYLPQPN (282 aa)) is the tr-type G domain. GTP is bound by residues 77 to 84 (AHIDSGKT), 148 to 152 (DTPGH), and 202 to 205 (NKMD).

It belongs to the TRAFAC class translation factor GTPase superfamily. Classic translation factor GTPase family. EF-G/EF-2 subfamily.

Its subcellular location is the mitochondrion. The protein operates within protein biosynthesis; polypeptide chain elongation. Its function is as follows. Mitochondrial GTPase that catalyzes the GTP-dependent ribosomal translocation step during translation elongation. During this step, the ribosome changes from the pre-translocational (PRE) to the post-translocational (POST) state as the newly formed A-site-bound peptidyl-tRNA and P-site-bound deacylated tRNA move to the P and E sites, respectively. Catalyzes the coordinated movement of the two tRNA molecules, the mRNA and conformational changes in the ribosome. The protein is Elongation factor G, mitochondrial of Meyerozyma guilliermondii (strain ATCC 6260 / CBS 566 / DSM 6381 / JCM 1539 / NBRC 10279 / NRRL Y-324) (Yeast).